We begin with the raw amino-acid sequence, 378 residues long: Stimulator of interferon genes protein (378 aa).

At 1 to 17 the chain is on the cytoplasmic side; that stretch reads MPYSSLHPSIPQPRGLR. The tract at residues 1-190 is mediates interaction with ZDHHC1 and ZDHHC11; that stretch reads MPYSSLHPSI…AYNQRHKNVL (190 aa). Residues 18–34 traverse the membrane as a helical segment; the sequence is AQVAALVLLGACLVALW. Residues 35–44 are Lumenal-facing; sequence GLGELPEYTL. A helical transmembrane segment spans residues 45–69; it reads RWLVLHLASQQIGLLVKGLCSLAEE. Residues 70-91 are Cytoplasmic-facing; the sequence is LCHVHSRYQSSYWRAARACLGC. Residues C88 and C91 are each lipidated (S-palmitoyl cysteine). The chain crosses the membrane as a helical span at residues 92-106; it reads PIRCGALLLLSCYFY. Residues 107-116 are Lumenal-facing; it reads FSIRDKAGLP. Residues 117–134 traverse the membrane as a helical segment; it reads LPWMLALLGLSQALNILL. At 135–378 the chain is on the cytoplasmic side; sequence GLQHLAPAEV…QPLPLRSDIF (244 aa). Residue K150 forms a Glycyl lysine isopeptide (Lys-Gly) (interchain with G-Cter in ubiquitin) linkage. Residues 153–339 are cyclic dinucleotide-binding domain (CBD); it reads FNVAHGLAWS…LRHLRQEERE (187 aa). 2',3'-cGAMP contacts are provided by S162 and Y167. Positions 162 and 167 each coordinate 3',3'-c-di-GMP. 2',3'-cUAMP is bound at residue Y167. Residue K236 forms a Glycyl lysine isopeptide (Lys-Gly) (interchain with G-Cter in ubiquitin) linkage. 2',3'-cGAMP is bound by residues R238 and T263. The 2',3'-cUAMP site is built by R238 and T263. Residues 238 to 241 and T263 contribute to the 3',3'-c-di-GMP site; that span reads RVYT. The C-terminal tail (CTT) stretch occupies residues 339–378; the sequence is EVTMGSAETSVVPTSSTLSQEPELLISGMEQPLPLRSDIF. S354 is modified (phosphoserine). T355 is modified (phosphothreonine). Phosphoserine; by TBK1 is present on residues S357 and S365. The pLxIS motif signature appears at 362 to 365; that stretch reads LLIS.

The protein belongs to the STING family. Homodimer; forms a homodimer in absence of cyclic nucleotide (c-di-GMP or cGAMP); 'Lys-63'-linked ubiquitination at Lys-150 is required for homodimerization. Homotetramer; in presence of cyclic nucleotide (c-di-GMP or cGAMP), forms tetramers and higher-order oligomers through side-by-side packing. Interacts (when phosphorylated) with IRF3; following activation and phosphorylation on the pLxIS motif by TBK1, recruits IRF3. Interacts with DDX58/RIG-I, MAVS and SSR2. Interacts with RNF5 and TRIM56. Interacts with TBK1; when homodimer, leading to subsequent production of IFN-beta. Interacts with IFIT1 and IFIT2. Interacts with TRIM29; this interaction induces STING1 ubiquitination and subsequent degradation. Associates with the MHC-II complex. Interacts with STEEP1; interaction takes place upon cGAMP-activation and STING1 phosphorylation by MAP3K7/TAK1 and promotes STING1 translocation to COPII vesicles. Interacts with SEC24A, SEC24B and SEC24C; promoting translocation to COPII vesicles. Interacts (when ubiquitinated) with SQSTM1; leading to relocalization to autophagosomes. Interacts with SURF4. Interacts with HNRNPA2B1. Interacts with ZDHHC1; ZDHHC1 constitutively interacts with STING1 and in presence of DNA viruses activates it by promoting its cGAMP-induced oligomerization and the recruitment of downstream signaling components. Interacts with ZDHHC11; in presence of DNA viruses promotes the recruitment of IRF3 to STING1. Interacts with TOMM70. Interacts with TAB1; promoting recruitment of TAB1 to the endoplasmic reticulum membrane and subsequent activation of MAP3K7/TAK1. Interacts (via transmembrane domain) with TMEM203. Interacts with DDX41. In terms of assembly, (Microbial infection) Interacts with African swine fever virus/ASFV protein A528R; this interaction mediates STING1 degradation. As to quaternary structure, (Microbial infection) Interacts with African swine fever virus/ASFV minor capsid protein p17. (Microbial infection) Interacts with Pseudorabies virus protein UL13; this interaction mediates STING1 degradation in a RNF5-dependent manner. Post-translationally, phosphorylation by TBK1 leads to activation and production of IFN-beta. Following cyclic nucleotide (c-di-GMP or cGAMP)-binding, activation and translocation from the endoplasmic reticulum, STING1 is phosphorylated by TBK1 at Ser-365 in the pLxIS motif. The phosphorylated pLxIS motif constitutes an IRF3-binding motif, leading to recruitment of the transcription factor IRF3 to induce type-I interferons and other cytokines. Phosphorylated on tyrosine residues upon MHC-II aggregation. Dephosphorylation by PPP6C leads to inactivation and decreased production of IFN-beta. Phosphorylation at Ser-357 is also required to activate IRF3. Phosphorylation at Ser-354 by MAP3K7/TAK1 facilitates its interaction with STEEP1, promoting STING1 translocation to COPII vesicles. In terms of processing, ubiquitinated. Ubiquitinated via 'Lys-63'-linked ubiquitin chains in response to double-stranded DNA treatment, leading to relocalization to autophagosomes and subsequent degradation; this process is dependent on SQSTM1. 'Lys-63'-linked ubiquitination mediated by TRIM56 at Lys-150 promotes homodimerization and recruitment of the antiviral kinase TBK1 and subsequent production of IFN-beta. 'Lys-48'-linked polyubiquitination at Lys-150 occurring after viral infection is mediated by RNF5 and leads to proteasomal degradation. 'Lys-11'-linked polyubiquitination at Lys-150 by RNF26 leads to stabilize STING1: it protects STING1 from RNF5-mediated 'Lys-48'-linked polyubiquitination. 'Lys-33'-linked and 'Lys-48'-linked deubiquitinated by USP20; leading to its stabilization and promotion of innate antiviral response. 'Lys-48'-linked deubiquitinated by USP44; leading to its stabilization and promotion of innate antiviral response. Deubiquitinated by USP13; leading to inhibition of innate antiviral response. 'Lys-63'-linked deubiquitinated by USP49; leading to inhibition of the subsequent recruitment of TBK1 to the signaling complex. 'Lys-63'-linked ubiquitination mediated by RNF39 promotes the activation of the cGAS-STING pathway. Palmitoylation takes place in the Golgi apparatus and creates a platform for the recruitment of TBK1. In terms of tissue distribution, expressed at higher level in the spleen, lymph node, lung and bone marrow, followed by the small intestine, heart, liver and brain, and to a lesser extent in the stomach and kidney.

The protein resides in the endoplasmic reticulum membrane. The protein localises to the cytoplasm. Its subcellular location is the perinuclear region. It localises to the endoplasmic reticulum-Golgi intermediate compartment membrane. It is found in the golgi apparatus membrane. The protein resides in the cytoplasmic vesicle. The protein localises to the autophagosome membrane. Its subcellular location is the mitochondrion outer membrane. It localises to the cell membrane. It catalyses the reaction H(+)(in) = H(+)(out). Its function is as follows. Facilitator of innate immune signaling that acts as a sensor of cytosolic DNA from bacteria and viruses and promotes the production of type I interferon (IFN-alpha and IFN-beta). Innate immune response is triggered in response to non-CpG double-stranded DNA from viruses and bacteria delivered to the cytoplasm. Acts by binding cyclic dinucleotides: recognizes and binds cyclic di-GMP (c-di-GMP), a second messenger produced by bacteria, cyclic UMP-AMP (2',3'-cUAMP), and cyclic GMP-AMP (cGAMP), a messenger produced by CGAS in response to DNA virus in the cytosol. Upon binding to c-di-GMP, cUAMP or cGAMP, STING1 oligomerizes, translocates from the endoplasmic reticulum and is phosphorylated by TBK1 on the pLxIS motif, leading to recruitment and subsequent activation of the transcription factor IRF3 to induce expression of type I interferon and exert a potent anti-viral state. Exhibits 2',3' phosphodiester linkage-specific ligand recognition: can bind both 2'-3' linked cGAMP (2'-3'-cGAMP) and 3'-3' linked cGAMP but is preferentially activated by 2'-3' linked cGAMP. The preference for 2'-3'-cGAMP, compared to other linkage isomers is probably due to the ligand itself, whichs adopts an organized free-ligand conformation that resembles the STING1-bound conformation and pays low energy costs in changing into the active conformation. In addition to promote the production of type I interferons, plays a direct role in autophagy. Following cGAMP-binding, STING1 buds from the endoplasmic reticulum into COPII vesicles, which then form the endoplasmic reticulum-Golgi intermediate compartment (ERGIC). The ERGIC serves as the membrane source for WIPI2 recruitment and LC3 lipidation, leading to formation of autophagosomes that target cytosolic DNA or DNA viruses for degradation by the lysosome. Promotes autophagy by acting as a proton channel that directs proton efflux from the Golgi to facilitate MAP1LC3B/LC3B lipidation. The autophagy- and interferon-inducing activities can be uncoupled and autophagy induction is independent of TBK1 phosphorylation. Autophagy is also triggered upon infection by bacteria: following c-di-GMP-binding, which is produced by live Gram-positive bacteria, promotes reticulophagy. May be involved in translocon function, the translocon possibly being able to influence the induction of type I interferons. May be involved in transduction of apoptotic signals via its association with the major histocompatibility complex class II (MHC-II). The protein is Stimulator of interferon genes protein of Sus scrofa (Pig).